The following is a 226-amino-acid chain: Charged multivesicular body protein 5 (226 aa).

The stretch at 21–93 (IAGVDARATN…NQSFNMEQAN (73 aa)) forms a coiled coil. Over residues 188–198 (KAPEAPSREPG) the composition is skewed to basic and acidic residues. Residues 188–226 (KAPEAPSREPGADSIVPGKSTIETDEFGLPKIPTSLKTT) are disordered. The residue at position 201 (serine 201) is a Phosphoserine. Threonine 226 carries the post-translational modification Phosphothreonine.

Belongs to the SNF7 family. As to quaternary structure, probable peripherally associated component of the endosomal sorting required for transport complex III (ESCRT-III).

The protein resides in the endosome membrane. Probable peripherally associated component of the endosomal sorting required for transport complex III (ESCRT-III) which is involved in multivesicular bodies (MVBs) formation and sorting of endosomal cargo proteins into MVBs. MVBs contain intraluminal vesicles (ILVs) that are generated by invagination and scission from the limiting membrane of the endosome and are delivered to lysosomes enabling degradation of membrane proteins. Specifically down-regulates Notch signaling activity in the germarium, probably by facilitating Notch endocytosis. This chain is Charged multivesicular body protein 5, found in Drosophila melanogaster (Fruit fly).